The chain runs to 638 residues: RNA exonuclease 3 (638 aa).

The segment at 37–136 (AQDQVLEQKE…PPRRAPKEAL (100 aa)) is disordered. Residues 55-76 (LKLEPRPEAKETPKDDLRHVSD) are compositionally biased toward basic and acidic residues. The span at 77–111 (SGRSTPVKKTTAPATNAENISPVSRQPNIPKNTAT) shows a compositional bias: polar residues. The Exonuclease domain maps to 408–584 (ICFDCEMGYT…VEDALATGDL (177 aa)). A compositionally biased stretch (polar residues) spans 612–622 (DSSSNTVSMQT). The disordered stretch occupies residues 612 to 638 (DSSSNTVSMQTKLGEGAGAKRAREGTS).

The protein belongs to the REXO1/REXO3 family.

The protein localises to the cytoplasm. The protein resides in the nucleus. In terms of biological role, 3' to 5' exoribonuclease required for proper 3' end maturation of MRP RNA and of the U5L snRNA. This Emericella nidulans (strain FGSC A4 / ATCC 38163 / CBS 112.46 / NRRL 194 / M139) (Aspergillus nidulans) protein is RNA exonuclease 3 (rex3).